The following is a 440-amino-acid chain: Argininosuccinate lyase (440 aa).

Belongs to the lyase 1 family. Argininosuccinate lyase subfamily.

The protein localises to the cytoplasm. It carries out the reaction 2-(N(omega)-L-arginino)succinate = fumarate + L-arginine. Its pathway is amino-acid biosynthesis; L-arginine biosynthesis; L-arginine from L-ornithine and carbamoyl phosphate: step 3/3. This is Argininosuccinate lyase from Clostridium botulinum (strain Kyoto / Type A2).